Consider the following 421-residue polypeptide: UDP-N-acetylglucosamine 1-carboxyvinyltransferase 1 (421 aa).

22-23 (KN) contributes to the phosphoenolpyruvate binding site. R94 lines the UDP-N-acetyl-alpha-D-glucosamine pocket. C118 functions as the Proton donor in the catalytic mechanism. C118 carries the 2-(S-cysteinyl)pyruvic acid O-phosphothioketal modification. Residues 123-127 (RPIEL), D310, and V332 each bind UDP-N-acetyl-alpha-D-glucosamine.

Belongs to the EPSP synthase family. MurA subfamily.

It is found in the cytoplasm. It carries out the reaction phosphoenolpyruvate + UDP-N-acetyl-alpha-D-glucosamine = UDP-N-acetyl-3-O-(1-carboxyvinyl)-alpha-D-glucosamine + phosphate. It participates in cell wall biogenesis; peptidoglycan biosynthesis. Functionally, cell wall formation. Adds enolpyruvyl to UDP-N-acetylglucosamine. The protein is UDP-N-acetylglucosamine 1-carboxyvinyltransferase 1 of Clostridium perfringens (strain 13 / Type A).